A 137-amino-acid chain; its full sequence is MVKLGFVIAEFNRDLTFMMEKLAEEHAAFLGADVSCKIMVPGSFDMPLAIKTLLQKDDIDAVVTIGCVIEGDTEHDEIVVQNAARKIADLSLEFGKPVALGIAGPGMTRMQAEDRIDYGKSAVEAAVKMVKRLKEIQ.

5-amino-6-(D-ribitylamino)uracil is bound by residues Phe11, 43–45 (SFD), and 67–69 (CVI). 72–73 (DT) serves as a coordination point for (2S)-2-hydroxy-3-oxobutyl phosphate. The active-site Proton donor is His75. Leu100 contacts 5-amino-6-(D-ribitylamino)uracil. Arg115 contacts (2S)-2-hydroxy-3-oxobutyl phosphate.

This sequence belongs to the DMRL synthase family. In terms of assembly, forms an icosahedral capsid composed of 60 subunits, arranged as a dodecamer of pentamers.

It carries out the reaction (2S)-2-hydroxy-3-oxobutyl phosphate + 5-amino-6-(D-ribitylamino)uracil = 6,7-dimethyl-8-(1-D-ribityl)lumazine + phosphate + 2 H2O + H(+). It participates in cofactor biosynthesis; riboflavin biosynthesis; riboflavin from 2-hydroxy-3-oxobutyl phosphate and 5-amino-6-(D-ribitylamino)uracil: step 1/2. Catalyzes the formation of 6,7-dimethyl-8-ribityllumazine by condensation of 5-amino-6-(D-ribitylamino)uracil with 3,4-dihydroxy-2-butanone 4-phosphate. This is the penultimate step in the biosynthesis of riboflavin. The polypeptide is 6,7-dimethyl-8-ribityllumazine synthase (Methanococcus maripaludis (strain C6 / ATCC BAA-1332)).